Here is a 334-residue protein sequence, read N- to C-terminus: Cathepsin J (334 aa).

Positions 1-17 are cleaved as a signal peptide; that stretch reads MTPTVLLLILCFGVASG. The propeptide at 18–113 is activation peptide; that stretch reads AQAHDPKLDA…PHAQNHVSIG (96 aa). Residue asparagine 72 is glycosylated (N-linked (GlcNAc...) asparagine). Disulfide bonds link cysteine 135–cysteine 178 and cysteine 169–cysteine 211. Cysteine 138 is an active-site residue. Residues asparagine 217, asparagine 221, and asparagine 268 are each glycosylated (N-linked (GlcNAc...) asparagine). Cysteine 269 and cysteine 322 are joined by a disulfide. Active-site residues include histidine 276 and asparagine 300.

It belongs to the peptidase C1 family. As to expression, expressed specifically in placenta.

The protein resides in the lysosome. The polypeptide is Cathepsin J (Ctsj) (Mus musculus (Mouse)).